The following is an 85-amino-acid chain: UPF0297 protein CPR_1749 (85 aa).

This sequence belongs to the UPF0297 family.

In Clostridium perfringens (strain SM101 / Type A), this protein is UPF0297 protein CPR_1749.